The primary structure comprises 46 residues: MAQNEEKTPKSQKIQDRIIMAMIWVVAALVIALVVGTALNYINIFK.

Residues 20–42 (MAMIWVVAALVIALVVGTALNYI) form a helical membrane-spanning segment.

It localises to the membrane. This is an uncharacterized protein from Bacillus subtilis (strain 168).